The chain runs to 436 residues: MANPVVAIVGRPNVGKSTIFNRIVGERISIVEDVPGVTRDRIYSSAEWLNHSFYLIDTGGIDIGDEPLLVQIRQQAEIAIDEADVIIFMTNGRDGVTAADEEVAKLLRRSNKPVVLAVNKIDNPEMRDLIYDFYALGFGEPYPISGAHGTGLGDLLDAVARHFPKDHGQEYEEDVIKFCLIGRPNVGKSSLVNAILGEERVIVSDIAGTTRDAVDTSFVREGQKYVIIDTAGMRKRGKIYESTEKYSVLRALRAIERSDVVLVVLNAEEGIIEQDKKIAGYAHEAGRGVILVVNKWDAVEKDDKTMVEFERKIRDHFPFLDYAPILFVSAKTKQRLHKLLPLVQLVSDNHAMRVQTNVLNEVIMDAVAMNPTPTHNGRRLKIYYMTQVAVKPPTFVAFVNDPELMHFSYERFLENRIRDAFGFEGTPIKIIARPRK.

EngA-type G domains lie at 4 to 167 (PVVA…PKDH) and 176 to 351 (IKFC…DNHA). Residues 10–17 (GRPNVGKS), 57–61 (DTGGI), 119–122 (NKID), 182–189 (GRPNVGKS), 229–233 (DTAGM), and 294–297 (NKWD) each bind GTP. In terms of domain architecture, KH-like spans 352–436 (MRVQTNVLNE…PIKIIARPRK (85 aa)).

It belongs to the TRAFAC class TrmE-Era-EngA-EngB-Septin-like GTPase superfamily. EngA (Der) GTPase family. In terms of assembly, associates with the 50S ribosomal subunit.

GTPase that plays an essential role in the late steps of ribosome biogenesis. In Geobacillus thermodenitrificans (strain NG80-2), this protein is GTPase Der.